Here is a 511-residue protein sequence, read N- to C-terminus: Cobyric acid synthase (511 aa).

In terms of domain architecture, GATase cobBQ-type spans 251-443 (LLDIAIICLP…IHGIFDNDIF (193 aa)). C332 acts as the Nucleophile in catalysis. H435 is an active-site residue.

This sequence belongs to the CobB/CobQ family. CobQ subfamily.

It participates in cofactor biosynthesis; adenosylcobalamin biosynthesis. In terms of biological role, catalyzes amidations at positions B, D, E, and G on adenosylcobyrinic A,C-diamide. NH(2) groups are provided by glutamine, and one molecule of ATP is hydrogenolyzed for each amidation. The sequence is that of Cobyric acid synthase from Listeria welshimeri serovar 6b (strain ATCC 35897 / DSM 20650 / CCUG 15529 / CIP 8149 / NCTC 11857 / SLCC 5334 / V8).